A 146-amino-acid chain; its full sequence is Snaclec mamushigin subunit beta (146 aa).

A signal peptide spans 1–23; that stretch reads MGRFIFLSFGLLVVFVSLSGTGA. 3 disulfides stabilise this stretch: Cys-25–Cys-36, Cys-53–Cys-142, and Cys-119–Cys-134. Residues 32 to 143 enclose the C-type lectin domain; the sequence is YEGHCYRVFQ…CSRTYNVVCK (112 aa).

As to quaternary structure, heterodimer of subunits alpha and beta; disulfide-linked. Expressed by the venom gland.

The protein localises to the secreted. Binds to platelet GPIbalpha (GP1BA) and enhances platelet aggregation at low-shear stress. At high-shear stress, blocks platelet aggregation in a dose-dependent manner. The protein is Snaclec mamushigin subunit beta of Gloydius blomhoffii (Mamushi).